We begin with the raw amino-acid sequence, 808 residues long: Sucrose synthase 2 (808 aa).

S10 is subject to Phosphoserine; by CPK. The GT-B glycosyltransferase stretch occupies residues 272–749 (MMFNVVILSP…GLQRIYEKYT (478 aa)).

Belongs to the glycosyltransferase 1 family. Plant sucrose synthase subfamily. As to quaternary structure, homotetramer or heterotetramer with SUS1. Post-translationally, phosphorylated at Ser-10 by CPK23 in developing seeds. Predominantly expressed in the leaf tissues. Expressed in seeds, and at lower levels in roots. Expressed in leaf mesophyll and phloem (at protein level).

The enzyme catalyses an NDP-alpha-D-glucose + D-fructose = a ribonucleoside 5'-diphosphate + sucrose + H(+). With respect to regulation, activated by phosphorylation at Ser-10 by CPK23. In terms of biological role, sucrose-cleaving enzyme that provides UDP-glucose and fructose for various metabolic pathways. Functions in developing seeds by supplying substrates for the biosynthesis of storage products. The polypeptide is Sucrose synthase 2 (SUS2) (Oryza sativa subsp. japonica (Rice)).